The chain runs to 320 residues: Phospho-N-acetylmuramoyl-pentapeptide-transferase (320 aa).

10 helical membrane-spanning segments follow: residues phenylalanine 6–glycine 26, methionine 54–leucine 74, leucine 81–isoleucine 101, leucine 117–serine 137, isoleucine 145–phenylalanine 165, isoleucine 175–phenylalanine 195, isoleucine 200–asparagine 220, isoleucine 226–leucine 246, phenylalanine 251–valine 271, and arginine 300–phenylalanine 320.

Belongs to the glycosyltransferase 4 family. MraY subfamily. The cofactor is Mg(2+).

It is found in the cell membrane. It carries out the reaction UDP-N-acetyl-alpha-D-muramoyl-L-alanyl-gamma-D-glutamyl-L-lysyl-D-alanyl-D-alanine + di-trans,octa-cis-undecaprenyl phosphate = Mur2Ac(oyl-L-Ala-gamma-D-Glu-L-Lys-D-Ala-D-Ala)-di-trans,octa-cis-undecaprenyl diphosphate + UMP. The protein operates within cell wall biogenesis; peptidoglycan biosynthesis. Its function is as follows. Catalyzes the initial step of the lipid cycle reactions in the biosynthesis of the cell wall peptidoglycan: transfers peptidoglycan precursor phospho-MurNAc-pentapeptide from UDP-MurNAc-pentapeptide onto the lipid carrier undecaprenyl phosphate, yielding undecaprenyl-pyrophosphoryl-MurNAc-pentapeptide, known as lipid I. This is Phospho-N-acetylmuramoyl-pentapeptide-transferase from Latilactobacillus sakei subsp. sakei (strain 23K) (Lactobacillus sakei subsp. sakei).